The chain runs to 43 residues: Defensin, isoforms B and C (43 aa).

Cystine bridges form between Cys3/Cys34, Cys20/Cys40, and Cys24/Cys42.

This sequence belongs to the invertebrate defensin family. Type 1 subfamily.

Its subcellular location is the secreted. Its function is as follows. Involved in anti Gram-positive activity of immune hemolymph of Z.atratus. The chain is Defensin, isoforms B and C from Zophobas atratus (Giant mealworm beetle).